A 331-amino-acid chain; its full sequence is Glycine betaine/proline betaine-binding periplasmic protein (331 aa).

The N-terminal stretch at 1–21 (MRHTVIFASAFATLVTASAFA) is a signal peptide. Residues Trp-86, His-90, and 161 to 163 (WGC) each bind substrate. An intrachain disulfide couples Cys-157 to Cys-163.

The complex is composed of two ATP-binding proteins (ProV), two transmembrane proteins (ProW) and a solute-binding protein (ProX).

It is found in the periplasm. In terms of biological role, part of the ProU ABC transporter complex involved in glycine betaine and proline betaine uptake. Binds glycine betaine and proline betaine with high affinity. The protein is Glycine betaine/proline betaine-binding periplasmic protein (proX) of Salmonella typhimurium (strain LT2 / SGSC1412 / ATCC 700720).